Here is a 121-residue protein sequence, read N- to C-terminus: Basic phospholipase A2 homolog piratoxin-1 (121 aa).

Cystine bridges form between C26–C115, C28–C44, C43–C95, C49–C121, C50–C88, C57–C81, and C75–C86. Residues 105 to 117 form an important for membrane-damaging activities in eukaryotes and bacteria; heparin-binding region; it reads KLYRYHLKPFCKK.

This sequence belongs to the phospholipase A2 family. Group II subfamily. K49 sub-subfamily. As to quaternary structure, homodimer; non-covalently linked. Expressed by the venom gland.

It localises to the secreted. Rosmarinic acid inhibits the myotoxic activity. Bromophenacyl bromide (BPB) inhibits the myotoxic activity through a covalent binding. Caffeic acid and aristolochic acid, two plant compounds used in folk medicine used to treat envenomation, inhibit the myotoxic activity. In terms of biological role, snake venom phospholipase A2 (PLA2) homolog that lacks enzymatic activity. Is myotoxic and displays edema-inducing activities. Induces neuromuscular blockage. A model of myotoxic mechanism has been proposed: an apo Lys49-PLA2 is activated by the entrance of a hydrophobic molecule (e.g. fatty acid) at the hydrophobic channel of the protein leading to a reorientation of a monomer. This reorientation causes a transition between 'inactive' to 'active' states, causing alignment of C-terminal and membrane-docking sites (MDoS) side-by-side and putting the membrane-disruption sites (MDiS) in the same plane, exposed to solvent and in a symmetric position for both monomers. The MDoS region stabilizes the toxin on membrane by the interaction of charged residues with phospholipid head groups. Subsequently, the MDiS region destabilizes the membrane with penetration of hydrophobic residues. This insertion causes a disorganization of the membrane, allowing an uncontrolled influx of ions (i.e. calcium and sodium), and eventually triggering irreversible intracellular alterations and cell death. The polypeptide is Basic phospholipase A2 homolog piratoxin-1 (Bothrops pirajai (Piraja's lancehead)).